Reading from the N-terminus, the 291-residue chain is ATP synthase gamma chain (291 aa).

It belongs to the ATPase gamma chain family. In terms of assembly, F-type ATPases have 2 components, CF(1) - the catalytic core - and CF(0) - the membrane proton channel. CF(1) has five subunits: alpha(3), beta(3), gamma(1), delta(1), epsilon(1). CF(0) has three main subunits: a, b and c.

Its subcellular location is the cell inner membrane. Functionally, produces ATP from ADP in the presence of a proton gradient across the membrane. The gamma chain is believed to be important in regulating ATPase activity and the flow of protons through the CF(0) complex. The chain is ATP synthase gamma chain from Neisseria meningitidis serogroup B (strain ATCC BAA-335 / MC58).